Here is a 596-residue protein sequence, read N- to C-terminus: SUN domain-containing protein 4 (596 aa).

Residues 28–48 traverse the membrane as a helical segment; it reads VSLSLVFLIWGLVFLSTLWIS. Disordered stretches follow at residues 58 to 98 and 139 to 158; these read LVDS…LSSD and KQSEINNNTVPGNDTETTGS. Residues 66–77 are compositionally biased toward acidic residues; sequence EPDDERADETAE. Composition is skewed to polar residues over residues 80 to 95 and 141 to 158; these read DATSLESTSVHSNPGL and SEINNNTVPGNDTETTGS. The 165-residue stretch at 179–343 folds into the SUN domain; the sequence is SNSRDKSLSG…SLLEVYGVDA (165 aa). Residues 366–396 show a composition bias toward basic and acidic residues; sequence DTEQKEKKTMQAKESFESDEDKSKQKEKEQE. The segment at 366–410 is disordered; that stretch reads DTEQKEKKTMQAKESFESDEDKSKQKEKEQEASPENAVVKDEVSL. Positions 475-544 form a coiled coil; it reads ASKREKEVET…LERLEWMEKK (70 aa). 2 consecutive transmembrane segments (helical) span residues 545–565 and 576–596; these read GVVVFTICVGFGTIAVVAVVF and GGLAWLLLLISSTFVMFILSL.

In terms of assembly, forms homomers and heteromers with SUN3. Interacts with SUN1, SUN2 and TIK.

The protein resides in the nucleus membrane. It localises to the endoplasmic reticulum membrane. In terms of biological role, encodes a member of the mid-SUN subfamily of SUN-domain proteins that is localized to both the nuclear envelope and the ER. It is involved in early seed development and nuclear morphology. [TAIR]. This Arabidopsis thaliana (Mouse-ear cress) protein is SUN domain-containing protein 4.